A 286-amino-acid chain; its full sequence is Isopentenyl-diphosphate Delta-isomerase II (286 aa).

In terms of domain architecture, Nudix hydrolase spans M104–L256. Residues C141 and E203 contribute to the active site.

It belongs to the IPP isomerase type 1 family.

The catalysed reaction is isopentenyl diphosphate = dimethylallyl diphosphate. Its pathway is isoprenoid biosynthesis; dimethylallyl diphosphate biosynthesis; dimethylallyl diphosphate from isopentenyl diphosphate: step 1/1. The protein operates within porphyrin-containing compound metabolism; chlorophyll biosynthesis. Functionally, catalyzes the 1,3-allylic rearrangement of the homoallylic substrate isopentenyl (IPP) to its highly electrophilic allylic isomer, dimethylallyl diphosphate (DMAPP). In Clarkia breweri (Fairy fans), this protein is Isopentenyl-diphosphate Delta-isomerase II (IPI2).